Here is a 537-residue protein sequence, read N- to C-terminus: Phosphoenolpyruvate carboxykinase (ATP) (537 aa).

Substrate contacts are provided by R64, Y204, and K210. ATP contacts are provided by residues K210, H229, and 245-253; that span reads GLSGTGKTT. Residues K210 and H229 each contribute to the Mn(2+) site. A Mn(2+)-binding site is contributed by D266. ATP contacts are provided by residues E294, R330, 446-447, and T452; that span reads RI. R330 contacts substrate.

Belongs to the phosphoenolpyruvate carboxykinase (ATP) family. As to quaternary structure, monomer. Mn(2+) serves as cofactor.

The protein resides in the cytoplasm. The enzyme catalyses oxaloacetate + ATP = phosphoenolpyruvate + ADP + CO2. The protein operates within carbohydrate biosynthesis; gluconeogenesis. Its function is as follows. Involved in the gluconeogenesis. Catalyzes the conversion of oxaloacetate (OAA) to phosphoenolpyruvate (PEP) through direct phosphoryl transfer between the nucleoside triphosphate and OAA. This Aliivibrio fischeri (strain ATCC 700601 / ES114) (Vibrio fischeri) protein is Phosphoenolpyruvate carboxykinase (ATP).